The sequence spans 628 residues: Propionate--CoA ligase (628 aa).

This sequence belongs to the ATP-dependent AMP-binding enzyme family.

It catalyses the reaction propanoate + ATP + CoA = propanoyl-CoA + AMP + diphosphate. It functions in the pathway organic acid metabolism; propanoate degradation. Its function is as follows. Catalyzes the synthesis of propionyl-CoA from propionate and CoA. Also converts acetate to acetyl-CoA but with a lower specific activity. The polypeptide is Propionate--CoA ligase (prpE) (Salmonella typhimurium (strain LT2 / SGSC1412 / ATCC 700720)).